Here is a 348-residue protein sequence, read N- to C-terminus: Ribosomal RNA small subunit methyltransferase C (348 aa).

Belongs to the methyltransferase superfamily. RsmC family. In terms of assembly, monomer.

The protein resides in the cytoplasm. The catalysed reaction is guanosine(1207) in 16S rRNA + S-adenosyl-L-methionine = N(2)-methylguanosine(1207) in 16S rRNA + S-adenosyl-L-homocysteine + H(+). Functionally, specifically methylates the guanine in position 1207 of 16S rRNA in the 30S particle. This Pectobacterium atrosepticum (strain SCRI 1043 / ATCC BAA-672) (Erwinia carotovora subsp. atroseptica) protein is Ribosomal RNA small subunit methyltransferase C.